The sequence spans 443 residues: Ribulose bisphosphate carboxylase large chain (443 aa).

Residues asparagine 89 and threonine 139 each contribute to the substrate site. Lysine 141 functions as the Proton acceptor in the catalytic mechanism. Residue lysine 143 participates in substrate binding. The Mg(2+) site is built by lysine 167, aspartate 169, and glutamate 170. N6-carboxylysine is present on lysine 167. The active-site Proton acceptor is histidine 260. Arginine 261, histidine 293, and serine 345 together coordinate substrate.

This sequence belongs to the RuBisCO large chain family. Type I subfamily. Heterohexadecamer of 8 large chains and 8 small chains; disulfide-linked. The disulfide link is formed within the large subunit homodimers. Mg(2+) serves as cofactor. The disulfide bond which can form in the large chain dimeric partners within the hexadecamer appears to be associated with oxidative stress and protein turnover.

The protein localises to the plastid. Its subcellular location is the chloroplast. The enzyme catalyses 2 (2R)-3-phosphoglycerate + 2 H(+) = D-ribulose 1,5-bisphosphate + CO2 + H2O. The catalysed reaction is D-ribulose 1,5-bisphosphate + O2 = 2-phosphoglycolate + (2R)-3-phosphoglycerate + 2 H(+). In terms of biological role, ruBisCO catalyzes two reactions: the carboxylation of D-ribulose 1,5-bisphosphate, the primary event in carbon dioxide fixation, as well as the oxidative fragmentation of the pentose substrate in the photorespiration process. Both reactions occur simultaneously and in competition at the same active site. The polypeptide is Ribulose bisphosphate carboxylase large chain (Verbena bonariensis (Argentinian vervain)).